The following is a 426-amino-acid chain: Enolase (426 aa).

Residue Q163 participates in (2R)-2-phosphoglycerate binding. E205 functions as the Proton donor in the catalytic mechanism. Mg(2+)-binding residues include D242, E286, and D313. Positions 338, 367, 368, and 389 each coordinate (2R)-2-phosphoglycerate. K338 (proton acceptor) is an active-site residue.

Belongs to the enolase family. The cofactor is Mg(2+).

It is found in the cytoplasm. The protein resides in the secreted. It localises to the cell surface. The enzyme catalyses (2R)-2-phosphoglycerate = phosphoenolpyruvate + H2O. It participates in carbohydrate degradation; glycolysis; pyruvate from D-glyceraldehyde 3-phosphate: step 4/5. Catalyzes the reversible conversion of 2-phosphoglycerate (2-PG) into phosphoenolpyruvate (PEP). It is essential for the degradation of carbohydrates via glycolysis. The chain is Enolase from Helicobacter pylori (strain Shi470).